Reading from the N-terminus, the 448-residue chain is Trigger factor (448 aa).

The 86-residue stretch at 163–248 (GDIVVIDFDG…VKDIRVPKAA (86 aa)) folds into the PPIase FKBP-type domain.

Belongs to the FKBP-type PPIase family. Tig subfamily.

It localises to the cytoplasm. The enzyme catalyses [protein]-peptidylproline (omega=180) = [protein]-peptidylproline (omega=0). Involved in protein export. Acts as a chaperone by maintaining the newly synthesized protein in an open conformation. Functions as a peptidyl-prolyl cis-trans isomerase. The protein is Trigger factor of Rhodospirillum centenum (strain ATCC 51521 / SW).